Reading from the N-terminus, the 198-residue chain is Recombination protein RecR (198 aa).

The segment at 57–72 (CSVCGHITDTDPCYIC) adopts a C4-type zinc-finger fold. The region spanning 80-175 (SMICVVEETK…KVTRLAHGLP (96 aa)) is the Toprim domain.

This sequence belongs to the RecR family.

In terms of biological role, may play a role in DNA repair. It seems to be involved in an RecBC-independent recombinational process of DNA repair. It may act with RecF and RecO. The chain is Recombination protein RecR from Macrococcus caseolyticus (strain JCSC5402) (Macrococcoides caseolyticum).